Reading from the N-terminus, the 255-residue chain is Hemin import ATP-binding protein HmuV (255 aa).

The ABC transporter domain occupies Leu2 to Asp238. Position 34-41 (Gly34–Ser41) interacts with ATP.

The protein belongs to the ABC transporter superfamily. Heme (hemin) importer (TC 3.A.1.14.5) family. In terms of assembly, the complex is composed of two ATP-binding proteins (HmuV), two transmembrane proteins (HmuU) and a solute-binding protein (HmuT).

The protein localises to the cell inner membrane. Functionally, part of the ABC transporter complex HmuTUV involved in hemin import. Responsible for energy coupling to the transport system. The protein is Hemin import ATP-binding protein HmuV of Pseudomonas entomophila (strain L48).